The sequence spans 213 residues: Ribosomal RNA small subunit methyltransferase G (213 aa).

S-adenosyl-L-methionine-binding positions include Gly-75, Phe-80, 128 to 129 (IE), and Arg-144.

The protein belongs to the methyltransferase superfamily. RNA methyltransferase RsmG family.

It localises to the cytoplasm. The catalysed reaction is guanosine(527) in 16S rRNA + S-adenosyl-L-methionine = N(7)-methylguanosine(527) in 16S rRNA + S-adenosyl-L-homocysteine. In terms of biological role, specifically methylates the N7 position of guanine in position 527 of 16S rRNA. The chain is Ribosomal RNA small subunit methyltransferase G from Brucella abortus (strain S19).